The chain runs to 223 residues: GTP cyclohydrolase 1 (223 aa).

Cysteine 111, histidine 114, and cysteine 182 together coordinate Zn(2+).

This sequence belongs to the GTP cyclohydrolase I family. In terms of assembly, homomer.

The catalysed reaction is GTP + H2O = 7,8-dihydroneopterin 3'-triphosphate + formate + H(+). Its pathway is cofactor biosynthesis; 7,8-dihydroneopterin triphosphate biosynthesis; 7,8-dihydroneopterin triphosphate from GTP: step 1/1. This is GTP cyclohydrolase 1 from Flavobacterium johnsoniae (strain ATCC 17061 / DSM 2064 / JCM 8514 / BCRC 14874 / CCUG 350202 / NBRC 14942 / NCIMB 11054 / UW101) (Cytophaga johnsonae).